Consider the following 864-residue polypeptide: Mitochondrial 15S rRNA processing factor CCM1 (864 aa).

The transit peptide at 1 to 76 directs the protein to the mitochondrion; it reads MYMARCGPKN…REFSNTLKER (76 aa). PPR repeat units follow at residues 319–353 and 356–390; these read NKQN…STKH and DICT…NIKP.

The protein belongs to the CCM1 family. In terms of assembly, binds to mitochondrial small subunit 15S rRNA.

It is found in the mitochondrion. Regulates mitochondrial small subunit maturation by controlling 15S rRNA 5'-end processing. Localizes to the 5' precursor of the 15S rRNA in a position that is subsequently occupied by mS47 in the mature yeast mtSSU. Uses structure and sequence-specific RNA recognition, binding to a single-stranded region of the precursor and specifically recognizing bases -6 to -1. The exchange of Ccm1 for mS47 is coupled to the irreversible removal of precursor rRNA that is accompanied by conformational changes of the mitoribosomal proteins uS5m and mS26. These conformational changes signal completion of 5'-end rRNA processing through protection of the mature 5'-end of the 15S rRNA and stabilization of mS47. The removal of the 5' precursor together with the dissociation of Ccm1 may be catalyzed by the 5'-3' exoribonuclease Pet127. Involved in the specific removal of group I introns in mitochondrial encoded transcripts. The chain is Mitochondrial 15S rRNA processing factor CCM1 (CCM1) from Saccharomyces cerevisiae (strain YJM789) (Baker's yeast).